Reading from the N-terminus, the 258-residue chain is Adenylate kinase (258 aa).

52–57 serves as a coordination point for ATP; sequence GAGKGT. The interval 72–101 is NMP; that stretch reads ATGDMLRSQVAKKTELGKEAKKIMDQGGLV. AMP contacts are provided by residues Thr73, Arg78, 99–101, 128–131, and Gln135; these read GLV and GFPR. An LID region spans residues 169–206; it reads GRLVHPASGRSYHKVFNPPKQEMKDDITGEPLIQRSDD. Residues Arg170 and 179-180 each bind ATP; that span reads SY. Residues Arg203 and Arg214 each coordinate AMP. Gln242 provides a ligand contact to ATP.

Belongs to the adenylate kinase family. AK2 subfamily. In terms of assembly, monomer.

It localises to the cytoplasm. The protein localises to the cytosol. The protein resides in the mitochondrion intermembrane space. The catalysed reaction is AMP + ATP = 2 ADP. In terms of biological role, catalyzes the reversible transfer of the terminal phosphate group between ATP and AMP. Plays an important role in cellular energy homeostasis and in adenine nucleotide metabolism. Adenylate kinase activity is critical for regulation of the phosphate utilization and the AMP de novo biosynthesis pathways. This Aspergillus oryzae (strain ATCC 42149 / RIB 40) (Yellow koji mold) protein is Adenylate kinase (adk1).